The chain runs to 689 residues: Shutoff protein (689 aa).

Residues M1 to P24 form a disordered region. The tract at residues V226–C289 is binding to host EIF4G. An RRM domain is found at R292 to L410. Y309 and Y627 each carry phosphotyrosine; by host. Residues G625–S689 are disordered. Residues S645–H655 show a composition bias toward basic and acidic residues. A compositionally biased stretch (basic residues) spans R656–R675. A compositionally biased stretch (basic and acidic residues) spans A678–S689.

Belongs to the adenoviridae shutoff protein family. In terms of assembly, monomer. Interacts with hexon protein; this interaction allows chaperoning and trimerization of hexon proteins. Interacts (via N-terminus) with host initiation factor EIF4G (via C-terminus). Interacts (via RRM domain) with viral mRNAs that contain the tripartite leader; this interaction allows ribosome shunting and expression of viral late mRNAs. Might be cleaved by the viral protease. In terms of processing, phosphorylated. Tyrosine phosphorylation enhances preferential binding to tripartite leader mRNAs and allows ribosome shunting. Post-translationally, methylated. Asymmetric dimethylation by host PRMT1 of the Arg/Gly-rich region may regulate shutoff protein binding to hexon and promote the capsid assembly in the nucleus.

Its subcellular location is the host cytoplasm. In terms of biological role, protein that inhibits host translation while promoting late viral translation by ribosome shunting. Blocks host cap-dependent translation by binding to eIF4G, displacing MKNK1 from cap initiation complexes and preventing EIF4E phosphorylation. Binds to the tripartite leader sequence of viral late mRNAs and recruits host eIF4G, PABPC1/poly-A binding protein and 40S ribosomes subunits on viral mRNAs, allowing ribosome shunting and efficient translation of late viral mRNAs even though conventional translation via ribosome scanning from the cap has been shut off in the host cell. During assembly, acts as a chaperone protein that helps hexon proteins assembly into trimers. This is Shutoff protein from Canis lupus familiaris (Dog).